A 531-amino-acid chain; its full sequence is Zinc finger protein 837 (531 aa).

The segment at 1 to 101 (MEAPAQKAGQ…CGPTSSQNPE (101 aa)) is disordered. Residues 24 to 50 (AREKRPEEPRPLEEDRAGSRPTQKGDL) show a composition bias toward basic and acidic residues. C2H2-type zinc fingers lie at residues 271-293 (YACD…QRIH), 299-321 (YECA…QKTH), 363-385 (YECA…RRVH), 391-413 (YACP…QRTH), 419-441 (YACP…QRAH), 447-469 (YGCS…ERLH), 475-497 (YICR…LRTH), and 503-525 (YACG…RKRH).

This sequence belongs to the krueppel C2H2-type zinc-finger protein family.

Its subcellular location is the nucleus. In terms of biological role, may be involved in transcriptional regulation. The chain is Zinc finger protein 837 (ZNF837) from Homo sapiens (Human).